Consider the following 187-residue polypeptide: 2-oxoglutarate synthase subunit KorC (187 aa).

In terms of assembly, heterotetramer of the KorA, KorB, KorC and KorD subunits.

It catalyses the reaction 2 oxidized [2Fe-2S]-[ferredoxin] + 2-oxoglutarate + CoA = succinyl-CoA + 2 reduced [2Fe-2S]-[ferredoxin] + CO2 + H(+). The sequence is that of 2-oxoglutarate synthase subunit KorC (korC) from Archaeoglobus fulgidus (strain ATCC 49558 / DSM 4304 / JCM 9628 / NBRC 100126 / VC-16).